The sequence spans 127 residues: QAVLYPSIYSILSKSKVRVQELEPVEGAAVPADTKKAEIKEKEHEVITHGLPVPYSSVVQPIVSSVVVNPGVIPAVVPVDAPTPADTKKAEISDNAVVAYHAAISPLSVVSHPVVSPLVHVPQVVYV.

Pyrrolidone carboxylic acid is present on Gln-1. 2 tandem repeats follow at residues 31 to 39 (PADTKKAEI) and 84 to 92 (PADTKKAEI).

The chain is Cuticle protein 4 from Blaberus craniifer (Death's head cockroach).